Reading from the N-terminus, the 443-residue chain is Xaa-Pro dipeptidase (443 aa).

Mn(2+)-binding residues include aspartate 246, aspartate 257, histidine 339, glutamate 384, and glutamate 423.

It belongs to the peptidase M24B family. Bacterial-type prolidase subfamily. Requires Mn(2+) as cofactor.

It catalyses the reaction Xaa-L-Pro dipeptide + H2O = an L-alpha-amino acid + L-proline. Its function is as follows. Splits dipeptides with a prolyl residue in the C-terminal position. The protein is Xaa-Pro dipeptidase of Klebsiella pneumoniae (strain 342).